The chain runs to 485 residues: Alpha-amylase (485 aa).

A signal peptide spans 1–18 (MFLTSVLILCSLAALSLG). Glutamine 19 bears the Pyrrolidone carboxylic acid mark. Residues cysteine 46 and cysteine 102 are joined by a disulfide bond. 3 residues coordinate Ca(2+): asparagine 116, arginine 164, and aspartate 173. Cysteine 152 and cysteine 166 are disulfide-bonded. Position 201 (arginine 201) interacts with chloride. Catalysis depends on aspartate 203, which acts as the Nucleophile. Histidine 207 contacts Ca(2+). Catalysis depends on glutamate 240, which acts as the Proton donor. Residues asparagine 303 and arginine 339 each coordinate chloride. A disulfide bridge connects residues cysteine 439 and cysteine 451. A glycan (N-linked (GlcNAc...) asparagine) is linked at asparagine 448.

The protein belongs to the glycosyl hydrolase 13 family. Monomer. It depends on Ca(2+) as a cofactor. The cofactor is chloride. In terms of tissue distribution, expressed in larval and adult gut.

It is found in the secreted. It carries out the reaction Endohydrolysis of (1-&gt;4)-alpha-D-glucosidic linkages in polysaccharides containing three or more (1-&gt;4)-alpha-linked D-glucose units.. This is Alpha-amylase from Phaedon cochleariae (Mustard beetle).